Here is a 680-residue protein sequence, read N- to C-terminus: Methionine--tRNA ligase (680 aa).

The 'HIGH' region motif lies at 15–25 (PYANGPVHIGH). 4 residues coordinate Zn(2+): Cys-147, Cys-150, Cys-160, and Cys-163. The 'KMSKS' region motif lies at 332-336 (KISTS). An ATP-binding site is contributed by Thr-335. The 102-residue stretch at 579 to 680 (DFLKLDIRVG…AEVAPGSQVK (102 aa)) folds into the tRNA-binding domain.

It belongs to the class-I aminoacyl-tRNA synthetase family. MetG type 1 subfamily. Homodimer. It depends on Zn(2+) as a cofactor.

Its subcellular location is the cytoplasm. The enzyme catalyses tRNA(Met) + L-methionine + ATP = L-methionyl-tRNA(Met) + AMP + diphosphate. Functionally, is required not only for elongation of protein synthesis but also for the initiation of all mRNA translation through initiator tRNA(fMet) aminoacylation. The chain is Methionine--tRNA ligase from Porphyromonas gingivalis (strain ATCC 33277 / DSM 20709 / CIP 103683 / JCM 12257 / NCTC 11834 / 2561).